Reading from the N-terminus, the 399-residue chain is Acetate kinase 2 (399 aa).

Asparagine 10 is a binding site for Mg(2+). An ATP-binding site is contributed by lysine 17. Arginine 89 provides a ligand contact to substrate. Aspartate 146 (proton donor/acceptor) is an active-site residue. ATP is bound by residues 206 to 210, 281 to 283, and 329 to 333; these read HLGNG, DCR, and GIGEN. Residue glutamate 384 participates in Mg(2+) binding.

Belongs to the acetokinase family. As to quaternary structure, homodimer. The cofactor is Mg(2+). Requires Mn(2+) as cofactor.

The protein resides in the cytoplasm. It carries out the reaction acetate + ATP = acetyl phosphate + ADP. It participates in metabolic intermediate biosynthesis; acetyl-CoA biosynthesis; acetyl-CoA from acetate: step 1/2. In terms of biological role, catalyzes the formation of acetyl phosphate from acetate and ATP. Can also catalyze the reverse reaction. The chain is Acetate kinase 2 from Neisseria meningitidis serogroup A / serotype 4A (strain DSM 15465 / Z2491).